A 314-amino-acid polypeptide reads, in one-letter code: Acetyl-coenzyme A carboxylase carboxyl transferase subunit alpha (314 aa).

Positions 32-289 (EIDMLEASLA…KRTFESHLSE (258 aa)) constitute a CoA carboxyltransferase C-terminal domain.

This sequence belongs to the AccA family. Acetyl-CoA carboxylase is a heterohexamer composed of biotin carboxyl carrier protein (AccB), biotin carboxylase (AccC) and two subunits each of ACCase subunit alpha (AccA) and ACCase subunit beta (AccD).

The protein localises to the cytoplasm. The enzyme catalyses N(6)-carboxybiotinyl-L-lysyl-[protein] + acetyl-CoA = N(6)-biotinyl-L-lysyl-[protein] + malonyl-CoA. It functions in the pathway lipid metabolism; malonyl-CoA biosynthesis; malonyl-CoA from acetyl-CoA: step 1/1. In terms of biological role, component of the acetyl coenzyme A carboxylase (ACC) complex. First, biotin carboxylase catalyzes the carboxylation of biotin on its carrier protein (BCCP) and then the CO(2) group is transferred by the carboxyltransferase to acetyl-CoA to form malonyl-CoA. The chain is Acetyl-coenzyme A carboxylase carboxyl transferase subunit alpha from Staphylococcus saprophyticus subsp. saprophyticus (strain ATCC 15305 / DSM 20229 / NCIMB 8711 / NCTC 7292 / S-41).